Here is a 365-residue protein sequence, read N- to C-terminus: Aminomethyltransferase (365 aa).

It belongs to the GcvT family. In terms of assembly, the glycine cleavage system is composed of four proteins: P, T, L and H.

It carries out the reaction N(6)-[(R)-S(8)-aminomethyldihydrolipoyl]-L-lysyl-[protein] + (6S)-5,6,7,8-tetrahydrofolate = N(6)-[(R)-dihydrolipoyl]-L-lysyl-[protein] + (6R)-5,10-methylene-5,6,7,8-tetrahydrofolate + NH4(+). The glycine cleavage system catalyzes the degradation of glycine. The protein is Aminomethyltransferase of Serratia proteamaculans (strain 568).